The primary structure comprises 394 residues: Quinolinate synthase (394 aa).

Iminosuccinate-binding residues include His-57 and Ser-74. Cys-121 is a binding site for [4Fe-4S] cluster. Iminosuccinate contacts are provided by residues 153 to 155 (YMN) and Ser-174. Cys-243 is a [4Fe-4S] cluster binding site. Residues 269–271 (HPE) and Thr-286 contribute to the iminosuccinate site. Cys-333 contributes to the [4Fe-4S] cluster binding site.

Belongs to the quinolinate synthase family. Type 3 subfamily. Requires [4Fe-4S] cluster as cofactor.

It localises to the cytoplasm. The enzyme catalyses iminosuccinate + dihydroxyacetone phosphate = quinolinate + phosphate + 2 H2O + H(+). The protein operates within cofactor biosynthesis; NAD(+) biosynthesis; quinolinate from iminoaspartate: step 1/1. In terms of biological role, catalyzes the condensation of iminoaspartate with dihydroxyacetone phosphate to form quinolinate. This chain is Quinolinate synthase, found in Corynebacterium glutamicum (strain ATCC 13032 / DSM 20300 / JCM 1318 / BCRC 11384 / CCUG 27702 / LMG 3730 / NBRC 12168 / NCIMB 10025 / NRRL B-2784 / 534).